The primary structure comprises 299 residues: ATP phosphoribosyltransferase (299 aa).

It belongs to the ATP phosphoribosyltransferase family. Long subfamily. As to quaternary structure, equilibrium between an active dimeric form, an inactive hexameric form and higher aggregates. Interconversion between the various forms is largely reversible and is influenced by the natural substrates and inhibitors of the enzyme. It depends on Mg(2+) as a cofactor.

Its subcellular location is the cytoplasm. The enzyme catalyses 1-(5-phospho-beta-D-ribosyl)-ATP + diphosphate = 5-phospho-alpha-D-ribose 1-diphosphate + ATP. The protein operates within amino-acid biosynthesis; L-histidine biosynthesis; L-histidine from 5-phospho-alpha-D-ribose 1-diphosphate: step 1/9. Feedback inhibited by histidine. Its function is as follows. Catalyzes the condensation of ATP and 5-phosphoribose 1-diphosphate to form N'-(5'-phosphoribosyl)-ATP (PR-ATP). Has a crucial role in the pathway because the rate of histidine biosynthesis seems to be controlled primarily by regulation of HisG enzymatic activity. The sequence is that of ATP phosphoribosyltransferase from Salmonella dublin (strain CT_02021853).